The chain runs to 618 residues: Dihydroxy-acid dehydratase (618 aa).

Aspartate 81 is a Mg(2+) binding site. Cysteine 122 contacts [2Fe-2S] cluster. Residues aspartate 123 and lysine 124 each contribute to the Mg(2+) site. Residue lysine 124 is modified to N6-carboxylysine. Cysteine 195 is a [2Fe-2S] cluster binding site. Glutamate 491 provides a ligand contact to Mg(2+). The active-site Proton acceptor is serine 517.

It belongs to the IlvD/Edd family. Homodimer. [2Fe-2S] cluster is required as a cofactor. Mg(2+) serves as cofactor.

The catalysed reaction is (2R)-2,3-dihydroxy-3-methylbutanoate = 3-methyl-2-oxobutanoate + H2O. It catalyses the reaction (2R,3R)-2,3-dihydroxy-3-methylpentanoate = (S)-3-methyl-2-oxopentanoate + H2O. Its pathway is amino-acid biosynthesis; L-isoleucine biosynthesis; L-isoleucine from 2-oxobutanoate: step 3/4. The protein operates within amino-acid biosynthesis; L-valine biosynthesis; L-valine from pyruvate: step 3/4. In terms of biological role, functions in the biosynthesis of branched-chain amino acids. Catalyzes the dehydration of (2R,3R)-2,3-dihydroxy-3-methylpentanoate (2,3-dihydroxy-3-methylvalerate) into 2-oxo-3-methylpentanoate (2-oxo-3-methylvalerate) and of (2R)-2,3-dihydroxy-3-methylbutanoate (2,3-dihydroxyisovalerate) into 2-oxo-3-methylbutanoate (2-oxoisovalerate), the penultimate precursor to L-isoleucine and L-valine, respectively. This is Dihydroxy-acid dehydratase from Rhodopseudomonas palustris (strain ATCC BAA-98 / CGA009).